The chain runs to 729 residues: Fatty acid oxidation complex subunit alpha (729 aa).

Residues 1 to 189 (MLYKGDTLYL…KIGLVDGVVA (189 aa)) form an enoyl-CoA hydratase/isomerase region. Asp296 is a substrate binding site. The segment at 311-729 (ETPKHAAVLG…ARPVGALKTA (419 aa)) is 3-hydroxyacyl-CoA dehydrogenase. NAD(+)-binding positions include Met324, Asp343, 400-402 (VVE), Lys407, and Ser429. His450 acts as the For 3-hydroxyacyl-CoA dehydrogenase activity in catalysis. Asn453 contacts NAD(+). Asn500 and Tyr660 together coordinate substrate.

It in the N-terminal section; belongs to the enoyl-CoA hydratase/isomerase family. In the C-terminal section; belongs to the 3-hydroxyacyl-CoA dehydrogenase family. Heterotetramer of two alpha chains (FadB) and two beta chains (FadA).

The enzyme catalyses a (3S)-3-hydroxyacyl-CoA + NAD(+) = a 3-oxoacyl-CoA + NADH + H(+). The catalysed reaction is a (3S)-3-hydroxyacyl-CoA = a (2E)-enoyl-CoA + H2O. It carries out the reaction a 4-saturated-(3S)-3-hydroxyacyl-CoA = a (3E)-enoyl-CoA + H2O. It catalyses the reaction (3S)-3-hydroxybutanoyl-CoA = (3R)-3-hydroxybutanoyl-CoA. The enzyme catalyses a (3Z)-enoyl-CoA = a 4-saturated (2E)-enoyl-CoA. The catalysed reaction is a (3E)-enoyl-CoA = a 4-saturated (2E)-enoyl-CoA. It functions in the pathway lipid metabolism; fatty acid beta-oxidation. Involved in the aerobic and anaerobic degradation of long-chain fatty acids via beta-oxidation cycle. Catalyzes the formation of 3-oxoacyl-CoA from enoyl-CoA via L-3-hydroxyacyl-CoA. It can also use D-3-hydroxyacyl-CoA and cis-3-enoyl-CoA as substrate. The sequence is that of Fatty acid oxidation complex subunit alpha from Klebsiella pneumoniae subsp. pneumoniae (strain ATCC 700721 / MGH 78578).